Consider the following 97-residue polypeptide: Sec-independent protein translocase protein TatA (97 aa).

The chain crosses the membrane as a helical span at residues 1-21; it reads MGFNIWSLLIILLIVALLFGT. Positions 28–97 are disordered; that stretch reads GGDLGGAIRG…SAEHHDRSTS (70 aa). The segment covering 37–56 has biased composition (basic and acidic residues); sequence GFKESMREGEEEEAQKRADG. Residues 78–87 are compositionally biased toward low complexity; sequence QARESSSARQ. The segment covering 88 to 97 has biased composition (basic and acidic residues); it reads SAEHHDRSTS.

Belongs to the TatA/E family. The Tat system comprises two distinct complexes: a TatABC complex, containing multiple copies of TatA, TatB and TatC subunits, and a separate TatA complex, containing only TatA subunits. Substrates initially bind to the TatABC complex, which probably triggers association of the separate TatA complex to form the active translocon.

Its subcellular location is the cell inner membrane. In terms of biological role, part of the twin-arginine translocation (Tat) system that transports large folded proteins containing a characteristic twin-arginine motif in their signal peptide across membranes. TatA could form the protein-conducting channel of the Tat system. This chain is Sec-independent protein translocase protein TatA, found in Halorhodospira halophila (strain DSM 244 / SL1) (Ectothiorhodospira halophila (strain DSM 244 / SL1)).